Reading from the N-terminus, the 165-residue chain is Regulator of ribonuclease activity A (165 aa).

This sequence belongs to the RraA family. Homotrimer. Binds to both RNA-binding sites in the C-terminal region of Rne and to RhlB.

The protein resides in the cytoplasm. Its function is as follows. Globally modulates RNA abundance by binding to RNase E (Rne) and regulating its endonucleolytic activity. Can modulate Rne action in a substrate-dependent manner by altering the composition of the degradosome. Modulates RNA-binding and helicase activities of the degradosome. This Actinobacillus pleuropneumoniae serotype 7 (strain AP76) protein is Regulator of ribonuclease activity A.